We begin with the raw amino-acid sequence, 24 residues long: Protein YriA (24 aa).

This Escherichia coli (strain K12) protein is Protein YriA.